The primary structure comprises 176 residues: MKPIIEQKAKVVAEIEEMIKSSQAAILVDYRGLTVAEMTELRRKLKEKGAEIKVVKNTLAKRAAHNLGITGLDPYLEGPTALAVAKEDPASAAKVLFDFAKDHPNLEIKVGILENIVLEKDQVKAIADLPPRNVLLAKLLGGMQAPLYGFAGALAGMLRKFVYALEAIRKQKAGEE.

Belongs to the universal ribosomal protein uL10 family. In terms of assembly, part of the ribosomal stalk of the 50S ribosomal subunit. The N-terminus interacts with L11 and the large rRNA to form the base of the stalk. The C-terminus forms an elongated spine to which L12 dimers bind in a sequential fashion forming a multimeric L10(L12)X complex.

In terms of biological role, forms part of the ribosomal stalk, playing a central role in the interaction of the ribosome with GTP-bound translation factors. In Carboxydothermus hydrogenoformans (strain ATCC BAA-161 / DSM 6008 / Z-2901), this protein is Large ribosomal subunit protein uL10.